The chain runs to 311 residues: Fucose-specific lectin (311 aa).

Repeat copies occupy residues 1–53 (MSTP…KNVI), 54–103 (AKAK…AGAK), 104–151 (FTVA…EGTN), 152–209 (LGVA…FDKA), 210–256 (PPRC…DKRT), and 257–311 (ITPV…PPAE). Residues 1–311 (MSTPGAQEVL…LGRRALPPAE (311 aa)) are 6 X approximate tandem repeats. Beta-L-fucose-binding residues include R25, E37, W44, R73, E85, W94, R126, E138, W146, R177, Q189, W198, R230, Q242, R277, and E291.

It belongs to the fungal fucose-specific lectin family. In terms of assembly, homodimer.

Lectin that specifically binds to L-fucose and weakly reacts with mannose and N-acetyl-neuraminic acid. Has strongest preference for the alpha-1,6-fucosylated chain (core fucose) on glycoproteins among alpha-1,2-, alpha-1,3-, alpha-1,4-, and alpha-1,6-fucosylated chains. Binds to fucose residues of IgE in mice and human, causing antigen-independent IgE-mediated mast cell activation and anaphylactoid reactions in mice and is possibly implicated in allergic response to Aspergillus oryzae in humans. Induces secretion of pro-inflammatory cytokines IL6 and IL8 implicated in ocular diseases such as mycotic keratitis, probably through its interaction with host toll-like receptors TLR2 and TLR4, followed by up-regulation of pro-inflammatory cytokines. The sequence is that of Fucose-specific lectin from Aspergillus oryzae (strain ATCC 42149 / RIB 40) (Yellow koji mold).